A 227-amino-acid polypeptide reads, in one-letter code: MKILMIEDNVSVCTMTEMFFFKEGFEAEFVHDGLEGYQRFTEENWDLIILDIMLPSMDGVTICRKIRETSTVPIIMLTAKDTESDQVIGFEMGADDYVTKPFSPLTLVARIKAVIRRYKATGKAVIDEDMIETECFTINKKTREVLLNGEPVENLTPKEFDLLYYLVQNPRQVFSREQLLEQVWGYQFYGDERTVDVHIKRLRKKLASEDKPFLYTVWGVGYKFDED.

Residues 2–115 (KILMIEDNVS…TLVARIKAVI (114 aa)) form the Response regulatory domain. Asp-51 is subject to 4-aspartylphosphate. A DNA-binding region (ompR/PhoB-type) is located at residues 128-226 (EDMIETECFT…VWGVGYKFDE (99 aa)).

Post-translationally, phosphorylated by YclK.

The protein localises to the cytoplasm. In terms of biological role, could be member of the two-component regulatory system YclK/YclJ. This is an uncharacterized protein from Bacillus subtilis (strain 168).